Reading from the N-terminus, the 398-residue chain is Alpha-2,8-sialyltransferase 8F (398 aa).

Topologically, residues 1 to 3 are cytoplasmic; it reads MRS. Residues 4-24 form a helical; Signal-anchor for type II membrane protein membrane-spanning segment; that stretch reads GGTLFALIGSLMLLLLLRMLW. The Lumenal segment spans residues 25–398; the sequence is CPADAPARSR…KLQFSKCETA (374 aa). 4 N-linked (GlcNAc...) asparagine glycosylation sites follow: N66, N93, N151, and N196. Cystine bridges form between C186–C335 and C200–C395. Substrate contacts are provided by residues N214, 236–238, and 322–324; these read NPS and STG. H370 serves as the catalytic Proton donor/acceptor.

The protein belongs to the glycosyltransferase 29 family. Highly expressed in kidney and expressed and all tissues tested.

The protein resides in the golgi apparatus membrane. The catalysed reaction is a ganglioside GM3 + CMP-N-acetyl-beta-neuraminate = a ganglioside GD3 + CMP + H(+). It catalyses the reaction a ganglioside GM3 (d18:1(4E)) + CMP-N-acetyl-beta-neuraminate = a ganglioside GD3 (d18:1(4E)) + CMP + H(+). The enzyme catalyses a ganglioside GD1a (d18:1(4E)) + CMP-N-acetyl-beta-neuraminate = a ganglioside GT1a (d18:1(4E)) + CMP + H(+). It carries out the reaction a ganglioside GD1a + CMP-N-acetyl-beta-neuraminate = a ganglioside GT1a + CMP + H(+). The catalysed reaction is a ganglioside GM1b (d18:1(4E)) + CMP-N-acetyl-beta-neuraminate = a ganglioside GD1c (d18:1(4E)) + CMP + H(+). It catalyses the reaction a ganglioside GM1b + CMP-N-acetyl-beta-neuraminate = a ganglioside GD1c + CMP + H(+). The enzyme catalyses a ganglioside GM4 (d18:1(4E)) + CMP-N-acetyl-beta-neuraminate = an N-acetyl-alpha-neuraminosyl-(2-&gt;8)-N-acetyl-alpha-neuraminosyl-(2-&gt;3)-beta-D-galactosyl-(1&lt;-&gt;1')-N-acylsphing-4-enine + CMP + H(+). It carries out the reaction N-acetyl-alpha-neuraminosyl-(2-&gt;3)-beta-D-galactosyl-(1&lt;-&gt;1')-ceramide + CMP-N-acetyl-beta-neuraminate = N-acetyl-alpha-neuraminosyl-(2-&gt;8)-N-acetyl-alpha-neuraminosyl-(2-&gt;3)-beta-D-galactosyl-(1&lt;-&gt;1')-ceramide + CMP + H(+). The catalysed reaction is a ganglioside GT1b (d18:1(4E)) + CMP-N-acetyl-beta-neuraminate = a ganglioside GQ1b (d18:1(4E)) + CMP + H(+). It catalyses the reaction a ganglioside GT1b + CMP-N-acetyl-beta-neuraminate = a ganglioside GQ1b + CMP + H(+). It functions in the pathway protein modification; protein glycosylation. In terms of biological role, alpha-2,8-sialyltransferase that prefers O-glycans to N-glycans or glycolipids as acceptor substrates. The minimal acceptor substrate is the NeuAc-alpha-2,3(6)-Gal sequence at the non-reducing end of their carbohydrate groups. The protein is Alpha-2,8-sialyltransferase 8F of Mus musculus (Mouse).